Here is a 259-residue protein sequence, read N- to C-terminus: DNA utilization protein HofM (259 aa).

In terms of biological role, required for the use of extracellular DNA as a nutrient. This chain is DNA utilization protein HofM (hofM), found in Escherichia coli (strain K12).